The primary structure comprises 251 residues: Aspartate/glutamate leucyltransferase (251 aa).

It belongs to the R-transferase family. Bpt subfamily.

It localises to the cytoplasm. It carries out the reaction N-terminal L-glutamyl-[protein] + L-leucyl-tRNA(Leu) = N-terminal L-leucyl-L-glutamyl-[protein] + tRNA(Leu) + H(+). The enzyme catalyses N-terminal L-aspartyl-[protein] + L-leucyl-tRNA(Leu) = N-terminal L-leucyl-L-aspartyl-[protein] + tRNA(Leu) + H(+). Its function is as follows. Functions in the N-end rule pathway of protein degradation where it conjugates Leu from its aminoacyl-tRNA to the N-termini of proteins containing an N-terminal aspartate or glutamate. The chain is Aspartate/glutamate leucyltransferase from Stenotrophomonas maltophilia (strain R551-3).